A 183-amino-acid chain; its full sequence is MPAYHSKFDTELKVLPLGNTNMGKLPIRTNFKGPAPQTNQDDIIDEALTYFKPNIFFREFEIKGPADRTMIYLIFYITECLRKLQKSPNKIAGQKDLHALALSHLLPIPGENGFPLNSMYKAPQSKPDEDEMRAYLQQIRQEIGARLCDLAFPDPQDRPSKWWLCFARRRFMDKGLVGQGVNL.

This sequence belongs to the ARPC3 family. Component of the Arp2/3 complex.

It localises to the cytoplasm. The protein localises to the cytoskeleton. Functions as a component of the Arp2/3 complex which is involved in regulation of actin polymerization and together with an activating nucleation-promoting factor (NPF) mediates the formation of branched actin networks. In Caenorhabditis elegans, this protein is Probable actin-related protein 2/3 complex subunit 3 (arx-5).